The sequence spans 485 residues: D-alanine--D-alanyl carrier protein ligase (485 aa).

144 to 145 serves as a coordination point for ATP; that stretch reads TS. Position 189 (aspartate 189) interacts with D-alanine. 284–289 is an ATP binding site; the sequence is NTYGPT. Valine 293 contacts D-alanine. ATP-binding residues include aspartate 365 and lysine 473. D-alanine is bound at residue lysine 473.

This sequence belongs to the ATP-dependent AMP-binding enzyme family. DltA subfamily.

Its subcellular location is the cytoplasm. The catalysed reaction is holo-[D-alanyl-carrier protein] + D-alanine + ATP = D-alanyl-[D-alanyl-carrier protein] + AMP + diphosphate. It functions in the pathway cell wall biogenesis; lipoteichoic acid biosynthesis. Functionally, catalyzes the first step in the D-alanylation of lipoteichoic acid (LTA), the activation of D-alanine and its transfer onto the D-alanyl carrier protein (Dcp) DltC. In an ATP-dependent two-step reaction, forms a high energy D-alanyl-AMP intermediate, followed by transfer of the D-alanyl residue as a thiol ester to the phosphopantheinyl prosthetic group of the Dcp. D-alanylation of LTA plays an important role in modulating the properties of the cell wall in Gram-positive bacteria, influencing the net charge of the cell wall. The protein is D-alanine--D-alanyl carrier protein ligase of Staphylococcus aureus (strain USA300).